The following is a 316-amino-acid chain: Olfactory receptor 5AP2 (316 aa).

Over 1–34 (MRLMKEVRGRNQTEVTEFLLLGLSDNPDLQGVLF) the chain is Extracellular. Residue N11 is glycosylated (N-linked (GlcNAc...) asparagine). Residues 35–55 (ALFLLIYMANMVGNLGMIVLI) traverse the membrane as a helical segment. A topological domain (cytoplasmic) is located at residue K56. A helical membrane pass occupies residues 57–77 (IDLCLHTPMYFFLSSLSFVDA). Topologically, residues 78–104 (SYSSSVTPKMLVNLMAENKAISFHGCA) are extracellular. C103 and C195 are joined by a disulfide. A helical membrane pass occupies residues 105-125 (AQFYFFGSFLGTECFLLAMMA). The Cytoplasmic segment spans residues 126–135 (YDRYAAIWNP). A helical membrane pass occupies residues 136–156 (LLYPVLVSGRICFLLIATSFL). Topologically, residues 157-210 (AGCGNAAIHTGMTFRLSFCGSNRINHFYCDTPPLLKLSCSDTHFNGIVIMAFSS) are extracellular. The helical transmembrane segment at 211–231 (FIVISCVMIVLISYLCIFIAV) threads the bilayer. The Cytoplasmic portion of the chain corresponds to 232 to 245 (LKMPSLEGRHKAFS). A helical membrane pass occupies residues 246 to 266 (TCASYLMAVTIFFGTILFMYL). Over 267-278 (RPTSSYSMEQDK) the chain is Extracellular. The chain crosses the membrane as a helical span at residues 279–299 (VVSVFYTVIIPVLNPLIYSLK). The Cytoplasmic segment spans residues 300–316 (NKDVKKALKKILWKHIL).

This sequence belongs to the G-protein coupled receptor 1 family.

It localises to the cell membrane. Odorant receptor. The chain is Olfactory receptor 5AP2 from Homo sapiens (Human).